We begin with the raw amino-acid sequence, 214 residues long: NAD(P)H-quinone oxidoreductase subunit 5, chloroplastic (214 aa).

The next 2 helical transmembrane spans lie at 84–104 (LFPLLILLLFTFFIGFIGIPF) and 152–172 (SLAILGLFIAYIFYGSAYSFF).

The protein belongs to the complex I subunit 5 family. NDH is composed of at least 16 different subunits, 5 of which are encoded in the nucleus.

It localises to the plastid. Its subcellular location is the chloroplast thylakoid membrane. It carries out the reaction a plastoquinone + NADH + (n+1) H(+)(in) = a plastoquinol + NAD(+) + n H(+)(out). The catalysed reaction is a plastoquinone + NADPH + (n+1) H(+)(in) = a plastoquinol + NADP(+) + n H(+)(out). In terms of biological role, NDH shuttles electrons from NAD(P)H:plastoquinone, via FMN and iron-sulfur (Fe-S) centers, to quinones in the photosynthetic chain and possibly in a chloroplast respiratory chain. The immediate electron acceptor for the enzyme in this species is believed to be plastoquinone. Couples the redox reaction to proton translocation, and thus conserves the redox energy in a proton gradient. This Brachypodium pinnatum (Tor grass) protein is NAD(P)H-quinone oxidoreductase subunit 5, chloroplastic (ndhF).